Reading from the N-terminus, the 211-residue chain is Proteasome subunit beta 2 (211 aa).

A propeptide spans 1 to 17 (MVIMGNELQLENKILKG) (removed in mature form; by autocatalysis). Residue Thr18 is the Nucleophile of the active site.

The protein belongs to the peptidase T1B family. The 20S proteasome core is composed of 14 alpha and 14 beta subunits that assemble into four stacked heptameric rings, resulting in a barrel-shaped structure. The two inner rings, each composed of seven catalytic beta subunits, are sandwiched by two outer rings, each composed of seven alpha subunits. The catalytic chamber with the active sites is on the inside of the barrel. Has a gated structure, the ends of the cylinder being occluded by the N-termini of the alpha-subunits. Is capped at one or both ends by the proteasome regulatory ATPase, PAN.

It is found in the cytoplasm. The catalysed reaction is Cleavage of peptide bonds with very broad specificity.. Its activity is regulated as follows. The formation of the proteasomal ATPase PAN-20S proteasome complex, via the docking of the C-termini of PAN into the intersubunit pockets in the alpha-rings, triggers opening of the gate for substrate entry. Interconversion between the open-gate and close-gate conformations leads to a dynamic regulation of the 20S proteasome proteolysis activity. Component of the proteasome core, a large protease complex with broad specificity involved in protein degradation. The sequence is that of Proteasome subunit beta 2 from Saccharolobus solfataricus (strain 98/2) (Sulfolobus solfataricus).